The chain runs to 1183 residues: DNA-directed RNA polymerase subunit beta (1183 aa).

A compositionally biased stretch (acidic residues) spans 1151–1162 (EIEMADVDDEDA). The disordered stretch occupies residues 1151–1183 (EIEMADVDDEDAAERKVDLQQKSAPESQKETTD).

The protein belongs to the RNA polymerase beta chain family. The RNAP catalytic core consists of 2 alpha, 1 beta, 1 beta' and 1 omega subunit. When a sigma factor is associated with the core the holoenzyme is formed, which can initiate transcription.

The catalysed reaction is RNA(n) + a ribonucleoside 5'-triphosphate = RNA(n+1) + diphosphate. Functionally, DNA-dependent RNA polymerase catalyzes the transcription of DNA into RNA using the four ribonucleoside triphosphates as substrates. The protein is DNA-directed RNA polymerase subunit beta of Staphylococcus epidermidis (strain ATCC 12228 / FDA PCI 1200).